The primary structure comprises 138 residues: Large ribosomal subunit protein uL16 (138 aa).

Belongs to the universal ribosomal protein uL16 family. In terms of assembly, part of the 50S ribosomal subunit.

In terms of biological role, binds 23S rRNA and is also seen to make contacts with the A and possibly P site tRNAs. This Corynebacterium kroppenstedtii (strain DSM 44385 / JCM 11950 / CIP 105744 / CCUG 35717) protein is Large ribosomal subunit protein uL16.